The chain runs to 631 residues: MHGLRLVCSIGTLPLVILAYPAASLHTTSAAVDLDSLRLTSNSEYVNSVHVDTNRSVAVSAEEHYTDTAARLVQNIVPGASFRLIDDHFVGDNGVAHVYFRQTLHGIDIDNADFNVNIGKDGLVLSFGHSFFTGALPSSHLDNTNVLSPEAALRGARDAIQLPLTIDNVSTEAAEGRNEYIFREAVGAVSDPKAKLVYLVKPEGTLALTWRIETDMYEHWLLTYIDAETTTVHGVVDYVADATYQVYPWGTNDPAEGHRTIVTDPWDLSASAYTWISDGRDNYTTTRGNNAIAHWNPTGGGSYLYNLRPSDPNLNFQWPYSPNMSPPRSYINASIVQLFYTANAYHDLLYTLGFTESAGNFQWNNSAHGGRDKDYVILNAQDGSGFSNANFATPPDGIPGRMRMYIWIESTPSRDGSFDAGIVIHEYTHGVSNRLTGGSHNAGCLSALESGGMGEGWGDFMATAIRIKPNDTRTTSYTMGAWADNDKCGVRDYPYSTSFTENPLNYTSVNTMNGVHAIGTVWATMLYEVLWNLIDKYGKNDGSRPVFRNGVPTDGKYLMMKLVVDGMALQPCNPNFVQARDAILDADIVLTGGKNRCEIWRGFAKRGLGQGAAHSSLNWMRRGSTLLPTGC.

The signal sequence occupies residues 1-19 (MHGLRLVCSIGTLPLVILA). Residues 20-241 (YPAASLHTTS…VHGVVDYVAD (222 aa)) constitute a propeptide that is removed on maturation. Residues asparagine 282, asparagine 332, and asparagine 364 are each glycosylated (N-linked (GlcNAc...) asparagine). Residue histidine 425 participates in Zn(2+) binding. Residue glutamate 426 is part of the active site. Histidine 429 contacts Zn(2+). Residues asparagine 470 and asparagine 505 are each glycosylated (N-linked (GlcNAc...) asparagine).

This sequence belongs to the peptidase M36 family. The cofactor is Zn(2+).

The protein localises to the secreted. Secreted metalloproteinase that allows assimilation of proteinaceous substrates. The protein is Extracellular metalloproteinase mep (mep) of Aspergillus niger (strain ATCC MYA-4892 / CBS 513.88 / FGSC A1513).